The chain runs to 101 residues: Putative septation protein SpoVG (101 aa).

The protein belongs to the SpoVG family.

Its function is as follows. Could be involved in septation. This chain is Putative septation protein SpoVG, found in Anaeromyxobacter dehalogenans (strain 2CP-C).